Here is a 562-residue protein sequence, read N- to C-terminus: MVKIVTVKTKAYQDQKPGTSGLRKRVKVFQSSSNYAENFIQSIISTVEPAQRQEATLVVGGDGRFYMKEAIQLIVRIAAANGIGRLVIGQNGILSTPAVSCIIRKIKAIGGIILTASHNPGGPNGDFGIKFNISNGGPAPEAITDKIFQISKTIEEYAICPDLHVDLGVLGKQQFDLENKFKPFTVEIVDSVEAYATMLRNIFDFNALKELLSGPNRLKIRIDAMHGVVGPYVKKILCEELGAPANSAVNCVPLEDFGGHHPDPNLTYAADLVETMKTGEHDFGAAFDGDGDRNMILGKHGFFVNPSDSVAVIAANIFSIPYFQQTGVRGFARSMPTSGALDRVANATKIALYETPTGWKFFGNLMDASKLSLCGEESFGTGSDHIREKDGLWAVLAWLSILATRKQSVEDILKDHWQKYGRNFFTRYDYEEVEAEGANKMMKELEALISDRSFVGKQFPVGDKVYTVEKIDNFEYSDPVDGSISRNQGLRLLFADGSRIIFRLSGTGSAGATIRLYIDSYEKDLAKIYQDPQVMLAPLISIALKVSQLQEKTGRTAPTVIT.

At M1 the chain carries N-acetylmethionine. K16 bears the N6-acetyllysine mark. R23 contributes to the alpha-D-glucose 1,6-bisphosphate binding site. T115 is subject to Phosphothreonine. Residue S117 participates in alpha-D-glucose 1,6-bisphosphate binding. S117 acts as the Phosphoserine intermediate in catalysis. S117 is a Mg(2+) binding site. Phosphoserine is present on residues S117 and S134. T185 carries the phosphothreonine modification. The residue at position 213 (S213) is a Phosphoserine. Mg(2+)-binding residues include D288, D290, and D292. Positions 292 and 293 each coordinate alpha-D-glucose 1,6-bisphosphate. K349 is modified (N6-acetyllysine). Y353 is modified (phosphotyrosine). T357 serves as a coordination point for alpha-D-glucose 1,6-bisphosphate. The residue at position 369 (S369) is a Phosphoserine. Positions 376, 378, and 389 each coordinate alpha-D-glucose 1,6-bisphosphate. S378 carries the phosphoserine modification. K419 bears the N6-succinyllysine mark. The residue at position 467 (T467) is a Phosphothreonine; by PAK1. 3 positions are modified to phosphoserine: S477, S485, and S505. T507 bears the Phosphothreonine mark. S509 and S541 each carry phosphoserine.

It belongs to the phosphohexose mutase family. In terms of assembly, monomer. Mg(2+) serves as cofactor. In terms of processing, phosphorylation at Thr-467 by PAK1 significantly enhances enzymatic activity.

The protein localises to the cytoplasm. The catalysed reaction is alpha-D-glucose 1-phosphate = alpha-D-glucose 6-phosphate. It catalyses the reaction O-phospho-L-seryl-[protein] + alpha-D-glucose 1-phosphate = alpha-D-glucose 1,6-bisphosphate + L-seryl-[protein]. It carries out the reaction alpha-D-glucose 1,6-bisphosphate + L-seryl-[protein] = O-phospho-L-seryl-[protein] + alpha-D-glucose 6-phosphate. Its function is as follows. Catalyzes the reversible isomerization of alpha-D-glucose 1-phosphate to alpha-D-glucose 6-phosphate. The mechanism proceeds via the intermediate compound alpha-D-glucose 1,6-bisphosphate. This enzyme participates in both the breakdown and synthesis of glucose. This is Phosphoglucomutase-1 (PGM1) from Bos taurus (Bovine).